The sequence spans 612 residues: Glutamine--fructose-6-phosphate aminotransferase [isomerizing] (612 aa).

C2 acts as the Nucleophile; for GATase activity in catalysis. The Glutamine amidotransferase type-2 domain maps to 2 to 219 (CGIVGANSTR…EGDIAIISKD (218 aa)). SIS domains lie at 287-427 (AKEL…LKNS) and 460-602 (ISEY…VDQP). Catalysis depends on K607, which acts as the For Fru-6P isomerization activity.

Homodimer.

It is found in the cytoplasm. The catalysed reaction is D-fructose 6-phosphate + L-glutamine = D-glucosamine 6-phosphate + L-glutamate. In terms of biological role, catalyzes the first step in hexosamine metabolism, converting fructose-6P into glucosamine-6P using glutamine as a nitrogen source. In Francisella tularensis subsp. tularensis (strain SCHU S4 / Schu 4), this protein is Glutamine--fructose-6-phosphate aminotransferase [isomerizing].